The primary structure comprises 393 residues: Protein FAM47E (393 aa).

Positions valine 326–alanine 354 form a coiled coil.

This sequence belongs to the FAM47 family. As to quaternary structure, interacts with PRMT5; the interaction is direct. Interacts with WDR77.

It is found in the nucleus. The protein localises to the chromosome. Its subcellular location is the cytoplasm. Functionally, promotes histone methylation by localizing the arginine methyltransferase PRMT5 to chromatin. In Homo sapiens (Human), this protein is Protein FAM47E (FAM47E).